Here is an 82-residue protein sequence, read N- to C-terminus: Cysteine proteinase inhibitor A (82 aa).

This sequence belongs to the cystatin family.

Strong inhibitor of papain and ficin but poor inhibitor of cathepsin H, B and L. This chain is Cysteine proteinase inhibitor A, found in Helianthus annuus (Common sunflower).